We begin with the raw amino-acid sequence, 265 residues long: Mlc titration factor A (265 aa).

His111, His148, His152, and Glu211 together coordinate Zn(2+).

This sequence belongs to the MtfA family. In terms of assembly, monomer in solution. Interacts with Mlc. Zn(2+) serves as cofactor.

The protein resides in the cytoplasm. Its activity is regulated as follows. Association between Mlc and MtfA may induce structural changes that activate the peptidase activity of MtfA while inactivating the DNA-binding ability of Mlc. The aminopeptidase activity is partially inhibited by metal chelators such as EDTA and phenantroline, but not by inhibitors for serine-, aspartyl-, or cysteine-proteases. In terms of biological role, involved in the modulation of the activity of the glucose-phosphotransferase system (glucose-PTS). Interacts with the transcriptional repressor Mlc, preventing its interaction with DNA and leading to the modulation of expression of genes regulated by Mlc, including ptsG, which encodes the PTS system glucose-specific EIICB component. Functionally, shows zinc-dependent metallopeptidase activity. In vitro, can cleave several artificial substrates. The highest activity is observed for L-alanine fused to 4-nitroanilide (L-alanine-pNA). Shows lower activity towards proline-pNA and valine-pNA. The protein is Mlc titration factor A of Klebsiella pneumoniae subsp. pneumoniae (strain ATCC 700721 / MGH 78578).